The chain runs to 558 residues: Polysialic acid transport protein KpsD (558 aa).

Residues 1–20 (MKLFKSILLIAACHAAQASA) form the signal peptide.

It to E.coli K5 KpsD.

The protein localises to the periplasm. Involved in the translocation of the polysialic acid capsule across the outer membrane to the cell surface. May function as the periplasmic binding element of the PSA transport system, in which it transiently interacts with the membrane component of the transporter, binds polysaccharide and transports the polymer to a component in the outer membrane. The protein is Polysialic acid transport protein KpsD (kpsD) of Escherichia coli.